Reading from the N-terminus, the 274-residue chain is NAD(P)H dehydrogenase [quinone] 1 (274 aa).

FAD-binding positions include His-12, 18 to 19 (FN), and Gln-67. Residue Ser-82 is modified to Phosphoserine. An FAD-binding site is contributed by 104 to 107 (LQWF). 126-128 (AYT) serves as a coordination point for substrate. FAD is bound by residues 148–151 (TTGG), Tyr-156, and Arg-201. The interval 225–274 (PSSLFDLNFQAGFLMKKEVQDEEKNKKFGLSVGHHLGKSIPTDNQIKARK) is important for apoenzyme conformational stability. Residues Lys-250 and Lys-251 each participate in a glycyl lysine isopeptide (Lys-Gly) (interchain with G-Cter in SUMO2) cross-link.

Belongs to the NAD(P)H dehydrogenase (quinone) family. In terms of assembly, homodimer. Interacts with PDLIM4 isoform 2; this interaction stabilizes PDLIM4 isoform 2 in response to oxidative stress and protects it from ubiquitin-independent degradation by the core 20S proteasome. Interacts with TP73 (via SAM domain); this interaction is NADH-dependent, stabilizes TP73 in response to oxidative stress and protects it from ubiquitin-independent degradation by the 20S proteasome. Interacts with TP53; this interaction is NADH-dependent, stabilizes TP53 in response to oxidative stress and protects it from ubiquitin-independent degradation by the 20S proteasome. Requires FAD as cofactor.

The protein localises to the cytoplasm. The protein resides in the cytosol. The enzyme catalyses a quinone + NADH + H(+) = a quinol + NAD(+). It catalyses the reaction a quinone + NADPH + H(+) = a quinol + NADP(+). It carries out the reaction ubiquinone-10 + NADH + H(+) = ubiquinol-10 + NAD(+). The catalysed reaction is menadione + NADH + H(+) = menadiol + NAD(+). Its activity is regulated as follows. Inhibited by dicoumarol. Functionally, flavin-containing quinone reductase that catalyzes two-electron reduction of quinones to hydroquinones using either NADH or NADPH as electron donors. In a ping-pong kinetic mechanism, the electrons are sequentially transferred from NAD(P)H to flavin cofactor and then from reduced flavin to the quinone, bypassing the formation of semiquinone and reactive oxygen species. Regulates cellular redox state primarily through quinone detoxification. Reduces components of plasma membrane redox system such as coenzyme Q and vitamin quinones, producing antioxidant hydroquinone forms. In the process may function as superoxide scavenger to prevent hydroquinone oxidation and facilitate excretion. Alternatively, can activate quinones and their derivatives by generating redox reactive hydroquinones with DNA cross-linking antitumor potential. Acts as a gatekeeper of the core 20S proteasome known to degrade proteins with unstructured regions. Upon oxidative stress, interacts with tumor suppressors TP53 and TP73 in a NADH-dependent way and inhibits their ubiquitin-independent degradation by the 20S proteasome. The protein is NAD(P)H dehydrogenase [quinone] 1 of Homo sapiens (Human).